The primary structure comprises 616 residues: MGRIGISCLFPASWHFSISPVGCPRILNTNLRQIMVISVLAAAVSLLYFSVVIIRNKYGRLTRDKKFQRYLARVTDIEATDTNNPNVNYGIVVDCGSSGSRVFVYCWPRHNGNPHDLLDIRQMRDKNRKPVVMKIKPGISEFATSPEKVSDYISPLLNFAAEHVPRAKHKETPLYILCTAGMRILPESQQKAILEDLLTDIPVHFDFLFSDSHAEVISGKQEGVYAWIGINFVLGRFEHIEDDDEAVVEVNIPGSESSEAIVRKRTAGILDMGGVSTQIAYEVPKTVSFASSQQEEVAKNLLAEFNLGCDVHQTEHVYRVYVATFLGFGGNAARQRYEDRIFANTIQKNRLLGKQTGLTPDMPYLDPCLPLDIKDEIQQNGQTIYLRGTGDFDLCRETIQPFMNKTNETQTSLNGVYQPPIHFQNSEFYGFSEFYYCTEDVLRMGGDYNAAKFTKAAKDYCATKWSILRERFDRGLYASHADLHRLKYQCFKSAWMFEVFHRGFSFPVNYKSLKTALQVYDKEVQWTLGAILYRTRFLPLRDIQQEAFRASHTHWRGVSFVYNHYLFSGCFLVVLLAILLYLLRLRRIHRRTPRSSSAAALWMEEGLPAQNAPGTL.

Residues 1–33 are Cytoplasmic-facing; sequence MGRIGISCLFPASWHFSISPVGCPRILNTNLRQ. A helical transmembrane segment spans residues 34–54; the sequence is IMVISVLAAAVSLLYFSVVII. The Lumenal segment spans residues 55–559; that stretch reads RNKYGRLTRD…ASHTHWRGVS (505 aa). The Proton acceptor role is filled by Glu222. The cysteines at positions 368 and 395 are disulfide-linked. N-linked (GlcNAc...) asparagine glycans are attached at residues Asn404 and Asn407. A disulfide bridge connects residues Cys461 and Cys490. The chain crosses the membrane as a helical span at residues 560-580; that stretch reads FVYNHYLFSGCFLVVLLAILL. At 581–616 the chain is on the cytoplasmic side; it reads YLLRLRRIHRRTPRSSSAAALWMEEGLPAQNAPGTL.

Belongs to the GDA1/CD39 NTPase family. Ca(2+) is required as a cofactor. It depends on Mg(2+) as a cofactor. As to expression, ubiquitous. Highest expression in testis and lowest in bladder.

It localises to the cytoplasmic vesicle. The protein localises to the autophagosome membrane. It is found in the lysosome membrane. Its subcellular location is the golgi apparatus membrane. It catalyses the reaction a ribonucleoside 5'-diphosphate + H2O = a ribonucleoside 5'-phosphate + phosphate + H(+). It carries out the reaction a ribonucleoside 5'-triphosphate + H2O = a ribonucleoside 5'-diphosphate + phosphate + H(+). The catalysed reaction is UDP + H2O = UMP + phosphate + H(+). The enzyme catalyses UTP + H2O = UDP + phosphate + H(+). It catalyses the reaction CTP + H2O = CDP + phosphate + H(+). It carries out the reaction GDP + H2O = GMP + phosphate + H(+). The catalysed reaction is GTP + H2O = GDP + phosphate + H(+). The enzyme catalyses 5-methyl-UTP + H2O = 5-methyl-UDP + phosphate + H(+). In terms of biological role, catalyzes the hydrolysis of nucleoside triphosphates and diphosphates in a calcium- or magnesium-dependent manner, with a preference for pyrimidines. Preferentially hydrolyzes UTP and TTP. AMP, ADP, ATP and UMP are not substrates. Preferentially activated by Ca(2+) over Mg(2+). Functionally, has a broad substrate specificity with the ability of cleaving all nucleotide di- and triphosphates with the exception of adenosine di- and triphosphate (ADP and ATP). Preferentially hydrolyzes CTP, UDP, CDP, GTP and GDP. Can use either Ca(2+) or Mg(2+) equally. This Homo sapiens (Human) protein is Ectonucleoside triphosphate diphosphohydrolase 4.